Here is a 520-residue protein sequence, read N- to C-terminus: Probable cytochrome P450 4p2 (520 aa).

Heme contacts are provided by E325 and C464.

Belongs to the cytochrome P450 family. It depends on heme as a cofactor.

It is found in the endoplasmic reticulum membrane. It localises to the microsome membrane. In terms of biological role, may be involved in the metabolism of insect hormones and in the breakdown of synthetic insecticides. The protein is Probable cytochrome P450 4p2 (Cyp4p2) of Drosophila melanogaster (Fruit fly).